The following is a 183-amino-acid chain: Ribulose bisphosphate carboxylase small subunit, chloroplastic (183 aa).

The transit peptide at Met1–Gln58 directs the protein to the chloroplast.

This sequence belongs to the RuBisCO small chain family. Heterohexadecamer of 8 large and 8 small subunits.

Its subcellular location is the plastid. It localises to the chloroplast. In terms of biological role, ruBisCO catalyzes two reactions: the carboxylation of D-ribulose 1,5-bisphosphate, the primary event in carbon dioxide fixation, as well as the oxidative fragmentation of the pentose substrate. Both reactions occur simultaneously and in competition at the same active site. Although the small subunit is not catalytic it is essential for maximal activity. The chain is Ribulose bisphosphate carboxylase small subunit, chloroplastic from Hevea brasiliensis (Para rubber tree).